A 142-amino-acid chain; its full sequence is Protein tost-1 (142 aa).

The tract at residues 97–123 is disordered; it reads KVFEEEDKENAPTKKAVLKPSSTDEKK.

Component of the tost-1 variant of the PETISCO complex (also called the pid-3, erh-2, tofu-6, and ife-3 small RNA complex) containing at least tost-1, tofu-6, ife-3, pid-3, and erh-2, which plays an essential role in embryogenesis. Within the complex interacts with erh-2. Within the complex interacts with pid-3 and tofu-6. In contrast to the pid-1 variant of the PETISCO complex, the tost-1 variant of the PETISCO complex plays a minor role in the biogenesis of a class of 21 nucleotide PIWI-interacting RNAs (piRNAs) that possess a uracil residue at the 5'-end (also called 21U-RNAs). Expressed in the germline.

Its subcellular location is the cytoplasm. The protein resides in the nucleus. Functionally, component of the tost-1 variant of the PETISCO complex which plays an essential role in embryogenesis. Within the complex acts as an adapter which binds to the complex via erh-2. Does not seem to play a role in the biogenesis of a class of 21 nucleotide PIWI-interacting RNAs (piRNAs) that possess a uracil residue at the 5'-end (also called 21U-RNAs). May inhibit 21U-RNA accumulation. Required for chromosome segregation and cell division in early embryos. The sequence is that of Protein tost-1 from Caenorhabditis elegans.